The chain runs to 209 residues: Thymidine kinase (209 aa).

ATP-binding positions include 25–32 (GCMFAGKT) and 103–106 (DEVQ). Catalysis depends on glutamate 104, which acts as the Proton acceptor. Zn(2+) contacts are provided by cysteine 160, cysteine 163, cysteine 198, and cysteine 201.

The protein belongs to the thymidine kinase family. As to quaternary structure, homotetramer.

The protein resides in the cytoplasm. The catalysed reaction is thymidine + ATP = dTMP + ADP + H(+). The polypeptide is Thymidine kinase (Mycoplasma capricolum subsp. capricolum (strain California kid / ATCC 27343 / NCTC 10154)).